Here is a 298-residue protein sequence, read N- to C-terminus: Large ribosomal subunit protein uL18 (298 aa).

The protein belongs to the universal ribosomal protein uL18 family. Component of the large ribosomal subunit. Mature ribosomes consist of a small (40S) and a large (60S) subunit. The 40S subunit contains about 32 different proteins and 1 molecule of RNA (18S). The 60S subunit contains 45 different proteins and 3 molecules of RNA (25S, 5.8S and 5S).

It localises to the cytoplasm. Its function is as follows. Component of the ribosome, a large ribonucleoprotein complex responsible for the synthesis of proteins in the cell. The small ribosomal subunit (SSU) binds messenger RNAs (mRNAs) and translates the encoded message by selecting cognate aminoacyl-transfer RNA (tRNA) molecules. The large subunit (LSU) contains the ribosomal catalytic site termed the peptidyl transferase center (PTC), which catalyzes the formation of peptide bonds, thereby polymerizing the amino acids delivered by tRNAs into a polypeptide chain. The nascent polypeptides leave the ribosome through a tunnel in the LSU and interact with protein factors that function in enzymatic processing, targeting, and the membrane insertion of nascent chains at the exit of the ribosomal tunnel. In Candida albicans (strain SC5314 / ATCC MYA-2876) (Yeast), this protein is Large ribosomal subunit protein uL18.